Reading from the N-terminus, the 162-residue chain is Peptidyl-prolyl cis-trans isomerase-like 1 (162 aa).

Positions 1–155 (MTTNIVLETT…EEVKIVKARV (155 aa)) constitute a PPIase cyclophilin-type domain.

It belongs to the cyclophilin-type PPIase family. PPIL1 subfamily.

The enzyme catalyses [protein]-peptidylproline (omega=180) = [protein]-peptidylproline (omega=0). PPIases accelerate the folding of proteins. It catalyzes the cis-trans isomerization of proline imidic peptide bonds in oligopeptides. This Gibberella zeae (strain ATCC MYA-4620 / CBS 123657 / FGSC 9075 / NRRL 31084 / PH-1) (Wheat head blight fungus) protein is Peptidyl-prolyl cis-trans isomerase-like 1 (CYP1).